A 318-amino-acid polypeptide reads, in one-letter code: Gamma-glutamyl hydrolase (318 aa).

An N-terminal signal peptide occupies residues 1 to 24 (MASPGCLLCVLGLLLCGAASLELS). A Gamma-glutamyl hydrolase domain is found at 25-318 (RPHGDTAKKP…SSFQQCYIFD (294 aa)). The N-linked (GlcNAc...) asparagine glycan is linked to asparagine 116. Cysteine 134 acts as the Nucleophile in catalysis. N-linked (GlcNAc...) asparagine glycans are attached at residues asparagine 163 and asparagine 203. Catalysis depends on histidine 244, which acts as the Proton donor. The N-linked (GlcNAc...) asparagine; partial glycan is linked to asparagine 307.

Belongs to the peptidase C26 family. As to quaternary structure, homodimer.

It localises to the secreted. It is found in the extracellular space. The protein resides in the lysosome. The protein localises to the melanosome. It carries out the reaction (6S)-5,6,7,8-tetrahydrofolyl-(gamma-L-Glu)(n) + (n-1) H2O = (6S)-5,6,7,8-tetrahydrofolate + (n-1) L-glutamate. Hydrolyzes the polyglutamate sidechains of pteroylpolyglutamates. Progressively removes gamma-glutamyl residues from pteroylpoly-gamma-glutamate to yield pteroyl-alpha-glutamate (folic acid) and free glutamate. May play an important role in the bioavailability of dietary pteroylpolyglutamates and in the metabolism of pteroylpolyglutamates and antifolates. This chain is Gamma-glutamyl hydrolase, found in Homo sapiens (Human).